The chain runs to 597 residues: CTP synthase (597 aa).

The tract at residues 1-272 (MARPKNVKYV…DMRVLKKLGL (272 aa)) is amidoligase domain. Ser18 is a binding site for CTP. Ser18 provides a ligand contact to UTP. 19-24 (SLGKGI) provides a ligand contact to ATP. Tyr59 serves as a coordination point for L-glutamine. ATP is bound at residue Asp76. Positions 76 and 146 each coordinate Mg(2+). CTP contacts are provided by residues 153 to 155 (DIE), 193 to 198 (KTKPTQ), and Lys229. Residues 193–198 (KTKPTQ) and Lys229 each bind UTP. Positions 299–543 (NVAICGKYTE…VGAAKAYADG (245 aa)) constitute a Glutamine amidotransferase type-1 domain. Position 363 (Gly363) interacts with L-glutamine. The active-site Nucleophile; for glutamine hydrolysis is the Cys390. L-glutamine is bound by residues 391–394 (LGMQ), Glu414, and Arg471. Catalysis depends on residues His516 and Glu518.

The protein belongs to the CTP synthase family. In terms of assembly, homotetramer.

It carries out the reaction UTP + L-glutamine + ATP + H2O = CTP + L-glutamate + ADP + phosphate + 2 H(+). It catalyses the reaction L-glutamine + H2O = L-glutamate + NH4(+). The catalysed reaction is UTP + NH4(+) + ATP = CTP + ADP + phosphate + 2 H(+). It functions in the pathway pyrimidine metabolism; CTP biosynthesis via de novo pathway; CTP from UDP: step 2/2. With respect to regulation, allosterically activated by GTP, when glutamine is the substrate; GTP has no effect on the reaction when ammonia is the substrate. The allosteric effector GTP functions by stabilizing the protein conformation that binds the tetrahedral intermediate(s) formed during glutamine hydrolysis. Inhibited by the product CTP, via allosteric rather than competitive inhibition. Its function is as follows. Catalyzes the ATP-dependent amination of UTP to CTP with either L-glutamine or ammonia as the source of nitrogen. Regulates intracellular CTP levels through interactions with the four ribonucleotide triphosphates. The polypeptide is CTP synthase (Chlorobium luteolum (strain DSM 273 / BCRC 81028 / 2530) (Pelodictyon luteolum)).